A 286-amino-acid chain; its full sequence is 33 kDa chaperonin (286 aa).

2 disulfide bridges follow: cysteine 233–cysteine 235 and cysteine 267–cysteine 270.

The protein belongs to the HSP33 family. Under oxidizing conditions two disulfide bonds are formed involving the reactive cysteines. Under reducing conditions zinc is bound to the reactive cysteines and the protein is inactive.

Its subcellular location is the cytoplasm. Redox regulated molecular chaperone. Protects both thermally unfolding and oxidatively damaged proteins from irreversible aggregation. Plays an important role in the bacterial defense system toward oxidative stress. This is 33 kDa chaperonin from Histophilus somni (strain 129Pt) (Haemophilus somnus).